The following is a 317-amino-acid chain: N-acetylmuramoyl-L-alanine amidase XlyB (317 aa).

An N-terminal signal peptide occupies residues 1–39; that stretch reads MSIPVKKNLVSEAKYALKCPNAMSAEYITIHNTANDASA. Residues 40–142 enclose the N-acetylmuramoyl-L-alanine amidase domain; that stretch reads ANEISYMIGN…QDWSGKYCPH (103 aa). Residues 177 to 221 enclose the LysM domain; sequence SEYHVKKGDTLSGIAASHGASVKTLQSINHITDPNHIKIGQVIKL.

Belongs to the N-acetylmuramoyl-L-alanine amidase 2 family.

It localises to the secreted. The catalysed reaction is Hydrolyzes the link between N-acetylmuramoyl residues and L-amino acid residues in certain cell-wall glycopeptides.. Functionally, autolysins are involved in some important biological processes such as cell separation, cell-wall turnover, competence for genetic transformation, formation of the flagella and sporulation. This Bacillus subtilis (strain 168) protein is N-acetylmuramoyl-L-alanine amidase XlyB (xlyB).